The chain runs to 298 residues: Oxygen-dependent coproporphyrinogen-III oxidase (298 aa).

Residue Ser92 coordinates substrate. Residues His96 and His106 each contribute to the a divalent metal cation site. The active-site Proton donor is His106. 108–110 (NVR) lines the substrate pocket. Residues His145 and His175 each contribute to the a divalent metal cation site. The segment at 239-274 (YVEFNLVYDRGTLFGLQSGGRSESILMSLPPRVRWE) is important for dimerization. 257-259 (GGR) provides a ligand contact to substrate.

It belongs to the aerobic coproporphyrinogen-III oxidase family. In terms of assembly, homodimer. A divalent metal cation is required as a cofactor.

The protein localises to the cytoplasm. The enzyme catalyses coproporphyrinogen III + O2 + 2 H(+) = protoporphyrinogen IX + 2 CO2 + 2 H2O. The protein operates within porphyrin-containing compound metabolism; protoporphyrin-IX biosynthesis; protoporphyrinogen-IX from coproporphyrinogen-III (O2 route): step 1/1. In terms of biological role, involved in the heme biosynthesis. Catalyzes the aerobic oxidative decarboxylation of propionate groups of rings A and B of coproporphyrinogen-III to yield the vinyl groups in protoporphyrinogen-IX. This Stenotrophomonas maltophilia (strain K279a) protein is Oxygen-dependent coproporphyrinogen-III oxidase.